A 427-amino-acid polypeptide reads, in one-letter code: Gamma-glutamyl phosphate reductase (427 aa).

It belongs to the gamma-glutamyl phosphate reductase family.

The protein localises to the cytoplasm. It carries out the reaction L-glutamate 5-semialdehyde + phosphate + NADP(+) = L-glutamyl 5-phosphate + NADPH + H(+). It functions in the pathway amino-acid biosynthesis; L-proline biosynthesis; L-glutamate 5-semialdehyde from L-glutamate: step 2/2. Functionally, catalyzes the NADPH-dependent reduction of L-glutamate 5-phosphate into L-glutamate 5-semialdehyde and phosphate. The product spontaneously undergoes cyclization to form 1-pyrroline-5-carboxylate. The chain is Gamma-glutamyl phosphate reductase from Sinorhizobium medicae (strain WSM419) (Ensifer medicae).